The following is a 192-amino-acid chain: Xanthine phosphoribosyltransferase (192 aa).

2 residues coordinate xanthine: Leu-20 and Asn-27. 128 to 132 (AHGEA) is a binding site for 5-phospho-alpha-D-ribose 1-diphosphate. Lys-156 contacts xanthine.

The protein belongs to the purine/pyrimidine phosphoribosyltransferase family. Xpt subfamily. Homodimer.

The protein resides in the cytoplasm. It carries out the reaction XMP + diphosphate = xanthine + 5-phospho-alpha-D-ribose 1-diphosphate. Its pathway is purine metabolism; XMP biosynthesis via salvage pathway; XMP from xanthine: step 1/1. Functionally, converts the preformed base xanthine, a product of nucleic acid breakdown, to xanthosine 5'-monophosphate (XMP), so it can be reused for RNA or DNA synthesis. The chain is Xanthine phosphoribosyltransferase from Lactobacillus johnsonii (strain CNCM I-12250 / La1 / NCC 533).